Reading from the N-terminus, the 540-residue chain is CTP synthase (540 aa).

An amidoligase domain region spans residues 1 to 267; sequence MKIMKFIFIT…GKLVTKKLNL (267 aa). Position 15 (Ser15) interacts with CTP. Ser15 lines the UTP pocket. 16-21 serves as a coordination point for ATP; the sequence is SLGKGI. An L-glutamine-binding site is contributed by Tyr56. Asp73 serves as a coordination point for ATP. Mg(2+) is bound by residues Asp73 and Glu141. Residues 148-150, 188-193, and Lys224 contribute to the CTP site; these read DIE and KTKPTQ. UTP is bound by residues 188-193 and Lys224; that span reads KTKPTQ. 240 to 242 contributes to the ATP binding site; sequence RDA. Residues 292-540 form the Glutamine amidotransferase type-1 domain; it reads TIGIVGKYVE…VRASLGEKIK (249 aa). Gly360 contributes to the L-glutamine binding site. Catalysis depends on Cys387, which acts as the Nucleophile; for glutamine hydrolysis. Residues 388-391, Glu411, and Arg468 each bind L-glutamine; that span reads MGMQ. Catalysis depends on residues His513 and Glu515.

Belongs to the CTP synthase family. As to quaternary structure, homotetramer.

The catalysed reaction is UTP + L-glutamine + ATP + H2O = CTP + L-glutamate + ADP + phosphate + 2 H(+). It carries out the reaction L-glutamine + H2O = L-glutamate + NH4(+). The enzyme catalyses UTP + NH4(+) + ATP = CTP + ADP + phosphate + 2 H(+). It functions in the pathway pyrimidine metabolism; CTP biosynthesis via de novo pathway; CTP from UDP: step 2/2. Allosterically activated by GTP, when glutamine is the substrate; GTP has no effect on the reaction when ammonia is the substrate. The allosteric effector GTP functions by stabilizing the protein conformation that binds the tetrahedral intermediate(s) formed during glutamine hydrolysis. Inhibited by the product CTP, via allosteric rather than competitive inhibition. Functionally, catalyzes the ATP-dependent amination of UTP to CTP with either L-glutamine or ammonia as the source of nitrogen. Regulates intracellular CTP levels through interactions with the four ribonucleotide triphosphates. In Methanocaldococcus jannaschii (strain ATCC 43067 / DSM 2661 / JAL-1 / JCM 10045 / NBRC 100440) (Methanococcus jannaschii), this protein is CTP synthase.